The following is a 102-amino-acid chain: Co-chaperonin GroES (102 aa).

This sequence belongs to the GroES chaperonin family. Heptamer of 7 subunits arranged in a ring. Interacts with the chaperonin GroEL.

It localises to the cytoplasm. Together with the chaperonin GroEL, plays an essential role in assisting protein folding. The GroEL-GroES system forms a nano-cage that allows encapsulation of the non-native substrate proteins and provides a physical environment optimized to promote and accelerate protein folding. GroES binds to the apical surface of the GroEL ring, thereby capping the opening of the GroEL channel. In Anabaena sp. (strain L31), this protein is Co-chaperonin GroES.